Consider the following 507-residue polypeptide: Probable circularly permuted 1,3-beta-glucanase P23A10.11c YJL171C (507 aa).

The first 22 residues, 1–22 (MIAKSFIASFLFLCFAFSGVKA), serve as a signal peptide directing secretion. Residues 228-264 (AAPPDSASESTPASTSYASSTTSATSTSTTSGSSGSS) are compositionally biased toward low complexity. The disordered stretch occupies residues 228–266 (AAPPDSASESTPASTSYASSTTSATSTSTTSGSSGSSDW). The short motif at 412–417 (EFDIFE) is the ExDxxE motif element. A glycan (N-linked (GlcNAc...) asparagine) is linked at Asn480.

Belongs to the PGA52 family.

It is found in the secreted. It catalyses the reaction Hydrolysis of (1-&gt;3)-beta-D-glucosidic linkages in (1-&gt;3)-beta-D-glucans.. Its function is as follows. Probable circularly permuted 1,3-beta-glucanase involved in cell wall modification through beta-1,3-glucan network alterations such as increased branching or remodeling. The polypeptide is Probable circularly permuted 1,3-beta-glucanase P23A10.11c YJL171C (Schizosaccharomyces pombe (strain 972 / ATCC 24843) (Fission yeast)).